The following is a 174-amino-acid chain: Peptide methionine sulfoxide reductase MsrA (174 aa).

The active site involves Cys10.

This sequence belongs to the MsrA Met sulfoxide reductase family.

The enzyme catalyses L-methionyl-[protein] + [thioredoxin]-disulfide + H2O = L-methionyl-(S)-S-oxide-[protein] + [thioredoxin]-dithiol. It carries out the reaction [thioredoxin]-disulfide + L-methionine + H2O = L-methionine (S)-S-oxide + [thioredoxin]-dithiol. In terms of biological role, has an important function as a repair enzyme for proteins that have been inactivated by oxidation. Catalyzes the reversible oxidation-reduction of methionine sulfoxide in proteins to methionine. The sequence is that of Peptide methionine sulfoxide reductase MsrA from Acinetobacter baumannii (strain SDF).